The primary structure comprises 78 residues: Conotoxin TsMSGL-13 (78 aa).

Residues 1–24 form the signal peptide; the sequence is MSGLGIMVLTLLLFMFMATSHQDA. The propeptide occupies 25–44; it reads GEKQATQRDAINVRRRRSIT. 3 cysteine pairs are disulfide-bonded: C51-C63, C55-C72, and C62-C76. F77 is modified (phenylalanine amide).

Belongs to the conotoxin O3 superfamily. Expressed by the venom duct.

Its subcellular location is the secreted. This Conus tessulatus (Tessellate cone) protein is Conotoxin TsMSGL-13.